Here is a 373-residue protein sequence, read N- to C-terminus: Tryptophan--tRNA ligase (373 aa).

The short motif at 79 to 87 (PSGKFHFGH) is the 'HIGH' region element. The 'KMSKS' region signature appears at 257 to 261 (KMSSS).

The protein belongs to the class-I aminoacyl-tRNA synthetase family.

It is found in the cytoplasm. The enzyme catalyses tRNA(Trp) + L-tryptophan + ATP = L-tryptophyl-tRNA(Trp) + AMP + diphosphate + H(+). In Hyperthermus butylicus (strain DSM 5456 / JCM 9403 / PLM1-5), this protein is Tryptophan--tRNA ligase.